A 334-amino-acid chain; its full sequence is MKENNNLEKLDPIATLETKFAKSSYFIADEIKDEKINAISTGSIHIDQITGINGIPVGKITEIYGNESSGKTTIALQTIAECQKTGGTVVLLDLEGSFDINYAKSLKVDLTKLIITQPQTGEQAFDMIETLIKTNSIDLIVIDSVAAMLPESEYQANMNEALMGAHARLMSKGLRKIQPLINKSKTAIIFINQLREKINTFFGNPEMTTGGKALKFYASLRIETKKADLIKEGINKIGIKTKVTTVKNKLAPPLQTCFIDIFFGSGFDYNNEIIDFAIQYGVLKKNGSWFYFNDNKIGQGREQLKNTLSKNNELFIQISEKTLEFVNNEKSNWQ.

Gly65–Thr72 contributes to the ATP binding site.

It belongs to the RecA family.

It is found in the cytoplasm. Its function is as follows. Can catalyze the hydrolysis of ATP in the presence of single-stranded DNA, the ATP-dependent uptake of single-stranded DNA by duplex DNA, and the ATP-dependent hybridization of homologous single-stranded DNAs. It interacts with LexA causing its activation and leading to its autocatalytic cleavage. The polypeptide is Protein RecA (Ureaplasma parvum serovar 3 (strain ATCC 27815 / 27 / NCTC 11736)).